We begin with the raw amino-acid sequence, 402 residues long: Nicotinate phosphoribosyltransferase (402 aa).

His-224 carries the phosphohistidine; by autocatalysis modification.

It belongs to the NAPRTase family. Transiently phosphorylated on a His residue during the reaction cycle. Phosphorylation strongly increases the affinity for substrates and increases the rate of nicotinate D-ribonucleotide production. Dephosphorylation regenerates the low-affinity form of the enzyme, leading to product release.

The enzyme catalyses nicotinate + 5-phospho-alpha-D-ribose 1-diphosphate + ATP + H2O = nicotinate beta-D-ribonucleotide + ADP + phosphate + diphosphate. It functions in the pathway cofactor biosynthesis; NAD(+) biosynthesis; nicotinate D-ribonucleotide from nicotinate: step 1/1. Its function is as follows. Catalyzes the synthesis of beta-nicotinate D-ribonucleotide from nicotinate and 5-phospho-D-ribose 1-phosphate at the expense of ATP. The chain is Nicotinate phosphoribosyltransferase from Neisseria meningitidis serogroup A / serotype 4A (strain DSM 15465 / Z2491).